A 132-amino-acid polypeptide reads, in one-letter code: uncharacterized protein (132 aa).

2 WD repeats span residues 14–53 and 58–97; these read DLQD…LEIL and AHDD…LANV.

This is an uncharacterized protein from Acanthamoeba polyphaga (Amoeba).